The sequence spans 269 residues: Homocitrate synthase subunit alpha (269 aa).

One can recognise a Pyruvate carboxyltransferase domain in the interval 3–255; the sequence is INIVDTTLRD…IYTGDFEDII (253 aa).

The protein belongs to the alpha-IPM synthase/homocitrate synthase family. In terms of assembly, heterodimer of an alpha and an omega chain.

It catalyses the reaction acetyl-CoA + 2-oxoglutarate + H2O = (2R)-homocitrate + CoA + H(+). Functionally, this protein is a Fe-Mo-cofactor biosynthetic component. The protein is Homocitrate synthase subunit alpha (nifV-ALPHA) of Clostridium pasteurianum.